Reading from the N-terminus, the 1066-residue chain is Pumilio homolog 2 (1066 aa).

The interval 1 to 260 is interaction with SNAPIN; sequence MNHDFQALAL…ATVGLFDYNS (260 aa). A phosphoserine mark is found at serine 67, serine 82, and serine 102. The interval 106–204 is disordered; sequence KLDSRFRKGN…NPSEGLGPLP (99 aa). Basic and acidic residues predominate over residues 119-133; it reads RDAETDGPEKGDQKG. A phosphoserine mark is found at serine 136, serine 178, and serine 182. 2 positions are modified to phosphothreonine: threonine 184 and threonine 396. The interval 494 to 553 is disordered; that stretch reads STNGLFRPIGTQPPQQQQQQPSTNLQSNSFYGSSSLTNSSQSSSLFSHGPGQPGSTSLGF. Residues 505-514 are compositionally biased toward low complexity; sequence QPPQQQQQQP. The segment covering 515 to 525 has biased composition (polar residues); the sequence is STNLQSNSFYG. The span at 526–540 shows a compositional bias: low complexity; the sequence is SSSLTNSSQSSSLFS. Residues serine 587 and serine 592 each carry the phosphoserine modification. Residues 620-650 are disordered; sequence SPIGMPLPSQTPGHSLTPPPSLSSHGSSSSL. Over residues 630–650 the composition is skewed to low complexity; sequence TPGHSLTPPPSLSSHGSSSSL. The residue at position 674 (arginine 674) is an Omega-N-methylarginine. Phosphoserine occurs at positions 684 and 700. Residues 706–1048 form the PUM-HD domain; sequence GRSRLLEDFR…HILAKLEKYY (343 aa). Pumilio repeat units lie at residues 726–761, 762–797, 798–835, 836–871, 872–907, 908–943, 944–979, and 983–1022; these read DLIG…MVFN, EILQ…ALAT, RIRG…EMVK, ELDG…FIID, AFKG…PILE, ELHQ…KIVS, EIRG…LLID, and CQND…IIMH. Positions 741–745 are adenine-nucleotide binding in RNA target; the sequence is SRFIQ. Residues 777 to 781 form a uracil-nucleotide binding in RNA target region; sequence NYVIQ. The tract at residues 813–817 is adenine-nucleotide binding in RNA target; it reads CRVIQ. The interval 851-855 is non-specific-nucleotide binding in RNA target; that stretch reads NHVVQ. Residues 887–891 are adenine-nucleotide binding in RNA target; sequence CRVIQ. Residues 923-927 are uracil-nucleotide binding in RNA target; sequence NYVIQ. Residues 959 to 963 are guanine-nucleotide binding in RNA target; it reads SNVVE. Residues 1002 to 1006 are uracil-nucleotide binding in RNA target; sequence NYVVQ.

Homodimer; homodimerizes in vitro. Interacts with DAZ1, DAZL and NANOS1 via its pumilio repeats. Interacts with NANOS3. Interacts with SNAPIN. Recruits the CCR4-POP2-NOT deadenylase leading to translational inhibition and mRNA degradation. Interacts with DDX20. In case of viral infection, interacts with DHX58. Interacts with TRIM71 (via NHL repeats) in an RNA-dependent manner. In terms of tissue distribution, expressed in male germ cells of adult testis (at protein level). Highly expressed in testis and ovary. Predominantly expressed in stem cells and germ cells. Expressed at lower level in brain, heart, kidney, liver, muscle, placenta, intestine and stomach Expressed in cerebellum, corpus callosum, caudate nucleus, hippocampus, medulla oblongata and putamen. Expressed in all fetal tissues tested.

Its subcellular location is the cytoplasm. It localises to the cytoplasmic granule. It is found in the perinuclear region. Its function is as follows. Sequence-specific RNA-binding protein that acts as a post-transcriptional repressor by binding the 3'-UTR of mRNA targets. Binds to an RNA consensus sequence, the Pumilio Response Element (PRE), 5'-UGUANAUA-3', that is related to the Nanos Response Element (NRE) (, PubMed:21397187). Mediates post-transcriptional repression of transcripts via different mechanisms: acts via direct recruitment of the CCR4-POP2-NOT deadenylase leading to translational inhibition and mRNA degradation. Also mediates deadenylation-independent repression by promoting accessibility of miRNAs. Acts as a post-transcriptional repressor of E2F3 mRNAs by binding to its 3'-UTR and facilitating miRNA regulation. Plays a role in cytoplasmic sensing of viral infection. Represses a program of genes necessary to maintain genomic stability such as key mitotic, DNA repair and DNA replication factors. Its ability to repress those target mRNAs is regulated by the lncRNA NORAD (non-coding RNA activated by DNA damage) which, due to its high abundance and multitude of PUMILIO binding sites, is able to sequester a significant fraction of PUM1 and PUM2 in the cytoplasm. May regulate DCUN1D3 mRNA levels. May support proliferation and self-renewal of stem cells. Binds specifically to miRNA MIR199A precursor, with PUM1, regulates miRNA MIR199A expression at a postranscriptional level. The protein is Pumilio homolog 2 (PUM2) of Homo sapiens (Human).